The primary structure comprises 383 residues: MRLSVFWFLPTHGDGKYLGTNEGARPVDHAYLQQIAQAADRLGFGGVLIPTGRSCEDAWLVAASLIPVTQRLRFLVALRPGVISPTQAARQAATLDRLSNGRALFNLVTGGDAEELAGDGVFLDHGERYAESAEFTRVWRRVLEGETVDYKGKHVHVRGARLMFKPVQQPRPPLWFGGSSEVAQDLAAEQVDVYLTWGEPPAQVKEKIARVQAKAAARGRKVRFGIRLHVIVRETNDEAWQAADRLISHLDDQTIAKAQAALARTDSVGQQRMAALHGGKRDRLEISPNLWAGVGLVRGGAGTALVGDGPTVAARMQEYADLGIETFILSGYPHLEEAYRVGELLFPHLELNIPEVPKPAAVQAHGEHVAHDFAPQKVPQGER.

The protein belongs to the SsuD family. As to quaternary structure, homotetramer.

It catalyses the reaction an alkanesulfonate + FMNH2 + O2 = an aldehyde + FMN + sulfite + H2O + 2 H(+). In terms of biological role, catalyzes the desulfonation of aliphatic sulfonates. This is Alkanesulfonate monooxygenase from Erwinia pyrifoliae (strain DSM 12163 / CIP 106111 / Ep16/96).